We begin with the raw amino-acid sequence, 153 residues long: Large ribosomal subunit protein uL22 (153 aa).

The protein belongs to the universal ribosomal protein uL22 family. As to quaternary structure, part of the 50S ribosomal subunit.

In terms of biological role, this protein binds specifically to 23S rRNA. It makes multiple contacts with different domains of the 23S rRNA in the assembled 50S subunit and ribosome. The globular domain of the protein is located near the polypeptide exit tunnel on the outside of the subunit, while an extended beta-hairpin is found that lines the wall of the exit tunnel in the center of the 70S ribosome. This chain is Large ribosomal subunit protein uL22, found in Methanococcus vannielii (strain ATCC 35089 / DSM 1224 / JCM 13029 / OCM 148 / SB).